Here is a 358-residue protein sequence, read N- to C-terminus: D-alanine--D-alanine ligase (358 aa).

One can recognise an ATP-grasp domain in the interval 136 to 341 (KYILQAAGVP…YGDLIEELIQ (206 aa)). 169-224 (EGSLLYPMFVKPANMGSSVGISKAENREELQNALALAYQYDSRAIVEQGIEAREIE) contributes to the ATP binding site. Aspartate 295, glutamate 308, and asparagine 310 together coordinate Mg(2+).

Belongs to the D-alanine--D-alanine ligase family. Requires Mg(2+) as cofactor. The cofactor is Mn(2+).

The protein resides in the cytoplasm. It carries out the reaction 2 D-alanine + ATP = D-alanyl-D-alanine + ADP + phosphate + H(+). Its pathway is cell wall biogenesis; peptidoglycan biosynthesis. Its function is as follows. Cell wall formation. This chain is D-alanine--D-alanine ligase, found in Enterococcus hirae (strain ATCC 9790 / DSM 20160 / JCM 8729 / LMG 6399 / NBRC 3181 / NCIMB 6459 / NCDO 1258 / NCTC 12367 / WDCM 00089 / R).